We begin with the raw amino-acid sequence, 138 residues long: Small ribosomal subunit protein uS11c (138 aa).

The protein belongs to the universal ribosomal protein uS11 family. Part of the 30S ribosomal subunit.

It is found in the plastid. The chain is Small ribosomal subunit protein uS11c from Cuscuta gronovii (Common dodder).